A 364-amino-acid chain; its full sequence is Chorismate synthase (364 aa).

Position 48 (Arg-48) interacts with NADP(+). Residues 126–128 (RSS), Gly-288, 303–307 (KPIAS), and Arg-329 each bind FMN.

It belongs to the chorismate synthase family. In terms of assembly, homotetramer. The cofactor is FMNH2.

The enzyme catalyses 5-O-(1-carboxyvinyl)-3-phosphoshikimate = chorismate + phosphate. It functions in the pathway metabolic intermediate biosynthesis; chorismate biosynthesis; chorismate from D-erythrose 4-phosphate and phosphoenolpyruvate: step 7/7. Functionally, catalyzes the anti-1,4-elimination of the C-3 phosphate and the C-6 proR hydrogen from 5-enolpyruvylshikimate-3-phosphate (EPSP) to yield chorismate, which is the branch point compound that serves as the starting substrate for the three terminal pathways of aromatic amino acid biosynthesis. This reaction introduces a second double bond into the aromatic ring system. The chain is Chorismate synthase from Desulfovibrio desulfuricans (strain ATCC 27774 / DSM 6949 / MB).